An 87-amino-acid polypeptide reads, in one-letter code: Beta-toxin Ct1a (87 aa).

An N-terminal signal peptide occupies residues 1–19; sequence MNSLLMITACLALIGTVWA. The LCN-type CS-alpha/beta domain occupies 20–85; sequence KEGYLVNHST…VWPLPKKTCN (66 aa). Intrachain disulfides connect Cys31–Cys84, Cys35–Cys60, Cys44–Cys65, and Cys48–Cys67. Asparagine amide is present on Asn85.

This sequence belongs to the long (4 C-C) scorpion toxin superfamily. Sodium channel inhibitor family. Beta subfamily. As to expression, expressed by the venom gland.

It localises to the secreted. Functionally, beta toxins bind voltage-independently at site-4 of sodium channels (Nav) and shift the voltage of activation toward more negative potentials thereby affecting sodium channel activation and promoting spontaneous and repetitive firing. Is lethal to mice but does not show toxicity to freshwater shrimp and crickets. This Centruroides tecomanus (Scorpion) protein is Beta-toxin Ct1a.